Reading from the N-terminus, the 562-residue chain is Sulfite reductase [NADPH] hemoprotein beta-component (562 aa).

Cysteine 426, cysteine 432, cysteine 471, and cysteine 475 together coordinate [4Fe-4S] cluster. Cysteine 475 lines the siroheme pocket.

It belongs to the nitrite and sulfite reductase 4Fe-4S domain family. In terms of assembly, alpha(8)-beta(8). The alpha component is a flavoprotein, the beta component is a hemoprotein. Siroheme serves as cofactor. [4Fe-4S] cluster is required as a cofactor.

It carries out the reaction hydrogen sulfide + 3 NADP(+) + 3 H2O = sulfite + 3 NADPH + 4 H(+). It participates in sulfur metabolism; hydrogen sulfide biosynthesis; hydrogen sulfide from sulfite (NADPH route): step 1/1. In terms of biological role, component of the sulfite reductase complex that catalyzes the 6-electron reduction of sulfite to sulfide. This is one of several activities required for the biosynthesis of L-cysteine from sulfate. In Shewanella denitrificans (strain OS217 / ATCC BAA-1090 / DSM 15013), this protein is Sulfite reductase [NADPH] hemoprotein beta-component.